Here is a 429-residue protein sequence, read N- to C-terminus: Glutamyl-tRNA reductase (429 aa).

Substrate contacts are provided by residues 56–59, Ser119, 124–126, and Gln130; these read TCNR and EPQ. The active-site Nucleophile is the Cys57. An NADP(+)-binding site is contributed by 199–204; that stretch reads GAGEMI.

Belongs to the glutamyl-tRNA reductase family. As to quaternary structure, homodimer.

The catalysed reaction is (S)-4-amino-5-oxopentanoate + tRNA(Glu) + NADP(+) = L-glutamyl-tRNA(Glu) + NADPH + H(+). The protein operates within porphyrin-containing compound metabolism; protoporphyrin-IX biosynthesis; 5-aminolevulinate from L-glutamyl-tRNA(Glu): step 1/2. Its function is as follows. Catalyzes the NADPH-dependent reduction of glutamyl-tRNA(Glu) to glutamate 1-semialdehyde (GSA). In Herminiimonas arsenicoxydans, this protein is Glutamyl-tRNA reductase.